We begin with the raw amino-acid sequence, 560 residues long: Membrane-bound O-acyltransferase GUP1 (560 aa).

At methionine 1–lysine 43 the chain is on the extracellular side. The helical transmembrane segment at phenylalanine 44–serine 64 threads the bilayer. At serine 65 to asparagine 101 the chain is on the cytoplasmic side. The helical transmembrane segment at phenylalanine 102 to serine 122 threads the bilayer. Residues threonine 123–aspartate 131 lie on the Extracellular side of the membrane. A helical membrane pass occupies residues leucine 132–alanine 152. Over histidine 153–lysine 165 the chain is Cytoplasmic. The chain crosses the membrane as a helical span at residues asparagine 166 to isoleucine 185. Residues asparagine 186 to leucine 276 are Extracellular-facing. The helical transmembrane segment at methionine 277 to phenylalanine 297 threads the bilayer. Over asparagine 298–arginine 322 the chain is Cytoplasmic. A helical membrane pass occupies residues phenylalanine 323–serine 343. Residues lysine 344–threonine 352 are Extracellular-facing. A helical transmembrane segment spans residues proline 353–isoleucine 373. The Cytoplasmic portion of the chain corresponds to proline 374–arginine 432. Helical transmembrane passes span valine 433–leucine 453 and leucine 454–phenylalanine 474. Residue histidine 447 is part of the active site. Residues serine 475–histidine 485 are Cytoplasmic-facing. A helical membrane pass occupies residues valine 486–phenylalanine 506. The Extracellular segment spans residues cysteine 507–glycine 526. The chain crosses the membrane as a helical span at residues phenylalanine 527–isoleucine 547. Residues arginine 548–cysteine 560 lie on the Cytoplasmic side of the membrane.

It belongs to the membrane-bound acyltransferase family. In terms of assembly, interacts with mitochondrial outer membrane voltage-dependent anion channel (VDAC) POR1.

Its subcellular location is the cell membrane. It is found in the endoplasmic reticulum membrane. The protein localises to the mitochondrion membrane. Functionally, membrane-bound O-acyltransferase involved in the remodeling of glycosylphosphatidylinositol (GPI) anchors. Acts only on GPI-anchored proteins, but not on free GPI lipids. Acts as an acyltransferase for GPI anchors that adds C26 fatty acids to the sn2 position of lyso-PI-containing GPI anchors. PER1 first deacylates, GUP1 subsequently reacylates the anchor lipid, thus replacing a shorter fatty acid (C16:0 or C18:0) by C26:0. Also involved in lipid metabolism, having profound effects on sphingolipid-sterol-ordered domains integrity and assembly. Together with GUP2, has an influence on the chemical composition of the yeast extracellular matrix (yECM) in yeast multicellular aggregates, such as biofilms and colonies. Involved in cell integrity and apoptosis. This chain is Membrane-bound O-acyltransferase GUP1 (GUP1), found in Saccharomyces cerevisiae (strain ATCC 204508 / S288c) (Baker's yeast).